The primary structure comprises 240 residues: Uridylate kinase (240 aa).

12 to 15 (KLSG) is an ATP binding site. Residues 20 to 25 (GEQGFG) form an involved in allosteric activation by GTP region. UMP is bound at residue Gly-54. Residues Gly-55 and Arg-59 each coordinate ATP. Residues Asp-74 and 135-142 (TGNPYFST) contribute to the UMP site. Asn-163, Tyr-169, and Asp-172 together coordinate ATP.

The protein belongs to the UMP kinase family. In terms of assembly, homohexamer.

It is found in the cytoplasm. It catalyses the reaction UMP + ATP = UDP + ADP. The protein operates within pyrimidine metabolism; CTP biosynthesis via de novo pathway; UDP from UMP (UMPK route): step 1/1. Its activity is regulated as follows. Allosterically activated by GTP. Inhibited by UTP. Its function is as follows. Catalyzes the reversible phosphorylation of UMP to UDP. The chain is Uridylate kinase from Bacillus cereus (strain ATCC 14579 / DSM 31 / CCUG 7414 / JCM 2152 / NBRC 15305 / NCIMB 9373 / NCTC 2599 / NRRL B-3711).